Reading from the N-terminus, the 72-residue chain is Guanine nucleotide-binding protein subunit gamma (72 aa).

Positions 32-72 (MVSVAPPKANPSVSSKTKQQQHFKPGKATKDKATTKCCTIS) are disordered. A lipid anchor (S-palmitoyl cysteine) is attached at Cys-68. The residue at position 69 (Cys-69) is a Cysteine methyl ester. Cys-69 carries S-farnesyl cysteine lipidation. Positions 70 to 72 (TIS) are cleaved as a propeptide — removed in mature form.

Belongs to the G protein gamma family. G proteins are composed of 3 units, alpha, beta and gamma. Binding of the beta-gamma subunit complex (git5-git11) to the alpha subunit (gpa2) facilitates interaction with GPCR git3.

The protein localises to the cell membrane. Its function is as follows. Gamma subunit of the heterotrimeric guanine nucleotide-binding protein (G protein) involved in glucose-induced cAMP signaling. The beta-gamma subunits (git5-git11) promote binding of the alpha subunit gpa2 to GPCR git3, which senses extracellular glucose, to activate cAMP-PKA signaling and repress sexual development and gluconeogenesis. The protein is Guanine nucleotide-binding protein subunit gamma (git11) of Schizosaccharomyces pombe (strain 972 / ATCC 24843) (Fission yeast).